The primary structure comprises 570 residues: MITPALRHSGTLSFAIKLTVASTLLTFASLSAHAEEQPASPPQPPDILLGPLFNDVQSVKLFPDQKTFADAVPNSDPLMILADYRMQRNQSGFDLRHFVDVNFTLPKEGEKYVPPEGQSLREHIDGLWPVLTRTTESAGKWDSLLPLPEPYVVPGGRFREVYYWDSYFTMLGLAESDHWDKVADMVANFGYELDSWGHIPNGNRTYYLSRSQPPFFAFMVELLAQHEGDDALKKYLPQLQKEYAYWMEGVENLQPGEQNKRVVKLDDGTVLNRYWDDRDTPRPESWMEDITTAKSNPNRPATEIYRDLRSAAASGWDFSSRWMDDPNQLSTIRTTSIVPVDLNALLYKLEKMLARASKAAGDDANANQYEALASARQKGIETHLWNNQEGWYADYDLKSKKVRNQLTAATLFPLYVNAAAKDRASKVAAATQAHLLQPGGLSTTSVKSGQQWDAPNGWAPLQWVATEGLQNYGQDNVAMDVTWRFLTNVQHTYDREQKLVEKYDVSSTGTGGGGGEYPLQDGFGWTNGVTLKMLDLICPKEKPCDSVPATRPAAPGASQPAPQKQVETTP.

Positions 1–34 are cleaved as a signal peptide; it reads MITPALRHSGTLSFAIKLTVASTLLTFASLSAHA. Residues Arg157, 164-165, Asn201, 210-212, 282-284, and Gly315 each bind substrate; these read WD, RSQ, and RPE. Residues Asp317 and Glu501 each act as proton donor/acceptor in the active site. Glu516 is a binding site for substrate. Residues 542–570 are disordered; that stretch reads KPCDSVPATRPAAPGASQPAPQKQVETTP. Positions 552-570 are enriched in low complexity; that stretch reads PAAPGASQPAPQKQVETTP.

The protein belongs to the glycosyl hydrolase 37 family. As to quaternary structure, monomer.

The protein localises to the periplasm. It carries out the reaction alpha,alpha-trehalose + H2O = alpha-D-glucose + beta-D-glucose. Functionally, provides the cells with the ability to utilize trehalose at high osmolarity by splitting it into glucose molecules that can subsequently be taken up by the phosphotransferase-mediated uptake system. The protein is Periplasmic trehalase of Citrobacter koseri (strain ATCC BAA-895 / CDC 4225-83 / SGSC4696).